The chain runs to 872 residues: Alanine--tRNA ligase (872 aa).

Zn(2+)-binding residues include histidine 567, histidine 571, cysteine 669, and histidine 673.

The protein belongs to the class-II aminoacyl-tRNA synthetase family. Zn(2+) serves as cofactor.

It localises to the cytoplasm. It catalyses the reaction tRNA(Ala) + L-alanine + ATP = L-alanyl-tRNA(Ala) + AMP + diphosphate. Its function is as follows. Catalyzes the attachment of alanine to tRNA(Ala) in a two-step reaction: alanine is first activated by ATP to form Ala-AMP and then transferred to the acceptor end of tRNA(Ala). Also edits incorrectly charged Ser-tRNA(Ala) and Gly-tRNA(Ala) via its editing domain. This chain is Alanine--tRNA ligase, found in Streptococcus pyogenes serotype M1.